The chain runs to 431 residues: Serine hydroxymethyltransferase 2 (431 aa).

(6S)-5,6,7,8-tetrahydrofolate is bound by residues L131 and 135–137 (GHL). N6-(pyridoxal phosphate)lysine is present on K240.

It belongs to the SHMT family. Homodimer. Pyridoxal 5'-phosphate serves as cofactor.

It localises to the cytoplasm. The catalysed reaction is (6R)-5,10-methylene-5,6,7,8-tetrahydrofolate + glycine + H2O = (6S)-5,6,7,8-tetrahydrofolate + L-serine. It participates in one-carbon metabolism; tetrahydrofolate interconversion. It functions in the pathway amino-acid biosynthesis; glycine biosynthesis; glycine from L-serine: step 1/1. Catalyzes the reversible interconversion of serine and glycine with tetrahydrofolate (THF) serving as the one-carbon carrier. This reaction serves as the major source of one-carbon groups required for the biosynthesis of purines, thymidylate, methionine, and other important biomolecules. Also exhibits THF-independent aldolase activity toward beta-hydroxyamino acids, producing glycine and aldehydes, via a retro-aldol mechanism. This Vibrio parahaemolyticus serotype O3:K6 (strain RIMD 2210633) protein is Serine hydroxymethyltransferase 2.